A 307-amino-acid polypeptide reads, in one-letter code: Protoheme IX farnesyltransferase (307 aa).

Helical transmembrane passes span 32–52 (MGIVNSNTLTVFTGFWLALHF), 65–85 (FFTIVGSALIMAGVCCLNNYI), 108–128 (PGFALAFGLVILLLGFVFLLL), 131–151 (PMAVLISFIGAFTYVVLYTLW), 158–178 (LNTVVGSISGAVPPLIGWAAI), 186–206 (IAWMLFLIMFIWQIPHFLALA), 251–271 (LGITFMVIATLLNIGWIALGL), and 287–307 (FVYSLNYLTILFVSMIVVTFF).

This sequence belongs to the UbiA prenyltransferase family. Protoheme IX farnesyltransferase subfamily. In terms of assembly, interacts with CtaA.

It localises to the cell membrane. The enzyme catalyses heme b + (2E,6E)-farnesyl diphosphate + H2O = Fe(II)-heme o + diphosphate. It participates in porphyrin-containing compound metabolism; heme O biosynthesis; heme O from protoheme: step 1/1. In terms of biological role, converts heme B (protoheme IX) to heme O by substitution of the vinyl group on carbon 2 of heme B porphyrin ring with a hydroxyethyl farnesyl side group. The polypeptide is Protoheme IX farnesyltransferase (Bacillus mycoides (strain KBAB4) (Bacillus weihenstephanensis)).